A 272-amino-acid polypeptide reads, in one-letter code: HMP-PP phosphatase (272 aa).

The Nucleophile role is filled by aspartate 8. Aspartate 8, aspartate 10, and aspartate 212 together coordinate Mg(2+).

This sequence belongs to the HAD-like hydrolase superfamily. Cof family. Mg(2+) serves as cofactor.

It catalyses the reaction 4-amino-2-methyl-5-(diphosphooxymethyl)pyrimidine + H2O = 4-amino-2-methyl-5-(phosphooxymethyl)pyrimidine + phosphate + H(+). Functionally, catalyzes the hydrolysis of 4-amino-2-methyl-5-hydroxymethylpyrimidine pyrophosphate (HMP-PP) to 4-amino-2-methyl-5-hydroxymethylpyrimidine phosphate (HMP-P). The protein is HMP-PP phosphatase of Salmonella choleraesuis (strain SC-B67).